A 194-amino-acid chain; its full sequence is Recombination protein RecR (194 aa).

Residues 52-67 (CTECRTFTEEEVCHIC) form a C4-type zinc finger. Residues 76–171 (GQICVVESPA…EASRIAHGVP (96 aa)) enclose the Toprim domain.

Belongs to the RecR family.

Its function is as follows. May play a role in DNA repair. It seems to be involved in an RecBC-independent recombinational process of DNA repair. It may act with RecF and RecO. The protein is Recombination protein RecR of Vibrio campbellii (strain ATCC BAA-1116).